The sequence spans 115 residues: Large ribosomal subunit protein bL19 (115 aa).

It belongs to the bacterial ribosomal protein bL19 family.

This protein is located at the 30S-50S ribosomal subunit interface and may play a role in the structure and function of the aminoacyl-tRNA binding site. The polypeptide is Large ribosomal subunit protein bL19 (Nitratidesulfovibrio vulgaris (strain DSM 19637 / Miyazaki F) (Desulfovibrio vulgaris)).